We begin with the raw amino-acid sequence, 111 residues long: Gastrula zinc finger protein XlCGF32.1 (111 aa).

4 C2H2-type zinc fingers span residues 6 to 28, 34 to 56, 62 to 84, and 89 to 111; these read FDCT…FLCH, FVCV…LRIH, SVCP…MRIH, and FMCS…LQIH.

This sequence belongs to the krueppel C2H2-type zinc-finger protein family.

It is found in the nucleus. Functionally, may be involved in transcriptional regulation. The sequence is that of Gastrula zinc finger protein XlCGF32.1 from Xenopus laevis (African clawed frog).